The primary structure comprises 527 residues: EGF domain-specific O-linked N-acetylglucosamine transferase (527 aa).

The signal sequence occupies residues 1-17 (MFMLLVFGALLPEVPLS). The Required for optimal activity signature appears at 295–297 (DYD). N-linked (GlcNAc...) asparagine glycosylation is present at asparagine 354. A Prevents secretion from ER motif is present at residues 524 to 527 (HDEL).

The protein belongs to the glycosyltransferase 61 family.

It is found in the endoplasmic reticulum lumen. It carries out the reaction L-seryl-[protein] + UDP-N-acetyl-alpha-D-glucosamine = 3-O-(N-acetyl-beta-D-glucosaminyl)-L-seryl-[protein] + UDP + H(+). It catalyses the reaction L-threonyl-[protein] + UDP-N-acetyl-alpha-D-glucosamine = 3-O-(N-acetyl-beta-D-glucosaminyl)-L-threonyl-[protein] + UDP + H(+). In terms of biological role, catalyzes the transfer of a single N-acetylglucosamine from UDP-GlcNAc to a serine or threonine residue in extracellular proteins resulting in their modification with a beta-linked N-acetylglucosamine (O-GlcNAc). Specifically glycosylates the Thr residue located between the fifth and sixth conserved cysteines of folded EGF-like domains. The chain is EGF domain-specific O-linked N-acetylglucosamine transferase (EOGT) from Bos taurus (Bovine).